Here is a 1039-residue protein sequence, read N- to C-terminus: Probable inorganic carbon transporter subunit DabA 1 (1039 aa).

4 residues coordinate Zn(2+): Cys-462, Asp-464, His-721, and Cys-736.

Belongs to the inorganic carbon transporter (TC 9.A.2) DabA family. Forms a complex with DabB. Zn(2+) is required as a cofactor.

It is found in the cell inner membrane. In terms of biological role, part of an energy-coupled inorganic carbon pump. This is Probable inorganic carbon transporter subunit DabA 1 from Nitrobacter hamburgensis (strain DSM 10229 / NCIMB 13809 / X14).